The following is a 329-amino-acid chain: Glycerol-3-phosphate dehydrogenase [NAD(P)+] (329 aa).

The NADPH site is built by Ser-13, Trp-14, His-34, and Lys-105. Sn-glycerol 3-phosphate is bound by residues Lys-105, Gly-134, and Ser-136. Residue Ala-138 coordinates NADPH. Sn-glycerol 3-phosphate-binding residues include Lys-189, Asp-242, Ser-252, Arg-253, and Asn-254. Lys-189 functions as the Proton acceptor in the catalytic mechanism. Arg-253 contacts NADPH. Val-277 and Glu-279 together coordinate NADPH.

This sequence belongs to the NAD-dependent glycerol-3-phosphate dehydrogenase family.

It is found in the cytoplasm. The catalysed reaction is sn-glycerol 3-phosphate + NAD(+) = dihydroxyacetone phosphate + NADH + H(+). It catalyses the reaction sn-glycerol 3-phosphate + NADP(+) = dihydroxyacetone phosphate + NADPH + H(+). The protein operates within membrane lipid metabolism; glycerophospholipid metabolism. Its function is as follows. Catalyzes the reduction of the glycolytic intermediate dihydroxyacetone phosphate (DHAP) to sn-glycerol 3-phosphate (G3P), the key precursor for phospholipid synthesis. The chain is Glycerol-3-phosphate dehydrogenase [NAD(P)+] from Legionella pneumophila subsp. pneumophila (strain Philadelphia 1 / ATCC 33152 / DSM 7513).